Reading from the N-terminus, the 99-residue chain is Large ribosomal subunit protein uL23 (99 aa).

Belongs to the universal ribosomal protein uL23 family. In terms of assembly, part of the 50S ribosomal subunit. Contacts protein L29, and trigger factor when it is bound to the ribosome.

In terms of biological role, one of the early assembly proteins it binds 23S rRNA. One of the proteins that surrounds the polypeptide exit tunnel on the outside of the ribosome. Forms the main docking site for trigger factor binding to the ribosome. The chain is Large ribosomal subunit protein uL23 from Magnetococcus marinus (strain ATCC BAA-1437 / JCM 17883 / MC-1).